The sequence spans 797 residues: Probable exo-1,4-beta-xylosidase xlnD (797 aa).

The first 20 residues, 1-20, serve as a signal peptide directing secretion; that stretch reads MPGAASIVAVLAALLPTALG. Residues N23, N87, N142, and N237 are each glycosylated (N-linked (GlcNAc...) asparagine). The active site involves D310. N326, N391, N404, N442, N479, N521, N617, N644, N657, N684, and N706 each carry an N-linked (GlcNAc...) asparagine glycan.

Belongs to the glycosyl hydrolase 3 family.

It localises to the secreted. The enzyme catalyses Hydrolysis of (1-&gt;4)-beta-D-xylans, to remove successive D-xylose residues from the non-reducing termini.. It functions in the pathway glycan degradation; xylan degradation. In terms of biological role, xylan 1,4-beta-xylosidase involved in the hydrolysis of xylan, a major structural heterogeneous polysaccharide found in plant biomass representing the second most abundant polysaccharide in the biosphere, after cellulose. This Aspergillus flavus (strain ATCC 200026 / FGSC A1120 / IAM 13836 / NRRL 3357 / JCM 12722 / SRRC 167) protein is Probable exo-1,4-beta-xylosidase xlnD (xlnD).